The primary structure comprises 128 residues: Large ribosomal subunit protein bL19 (128 aa).

The protein belongs to the bacterial ribosomal protein bL19 family.

In terms of biological role, this protein is located at the 30S-50S ribosomal subunit interface and may play a role in the structure and function of the aminoacyl-tRNA binding site. In Herminiimonas arsenicoxydans, this protein is Large ribosomal subunit protein bL19.